A 549-amino-acid chain; its full sequence is Cytochrome bc1 complex cytochrome b subunit (549 aa).

Residues 45–65 (FLLGEIALYSFVVLLITGVYL) traverse the membrane as a helical segment. Heme is bound by residues H114 and H128. The next 3 helical transmembrane spans lie at 118 to 138 (ALMF…TGAF), 146 to 166 (WVIG…GYSL), and 189 to 209 (VIGT…TILI). H216 and H231 together coordinate heme. 5 helical membrane passes run 217-237 (ILLL…LVWF), 266-286 (SGAF…LLQI), 335-355 (PVWV…YPFL), 381-401 (IGAM…NDII), and 418-438 (IGMV…CIGL).

It belongs to the cytochrome b family. In terms of assembly, the cytochrome bc1 complex is composed of a cytochrome b (QcrB), the Rieske iron-sulfur protein (QcrA) and a diheme cytochrome c (QcrC) subunit. Heme serves as cofactor.

The protein localises to the cell membrane. It catalyses the reaction a quinol + 2 Fe(III)-[cytochrome c](out) = a quinone + 2 Fe(II)-[cytochrome c](out) + 2 H(+)(out). Cytochrome b subunit of the cytochrome bc1 complex, an essential component of the respiratory electron transport chain required for ATP synthesis. The bc1 complex catalyzes the oxidation of ubiquinol and the reduction of cytochrome c in the respiratory chain. The bc1 complex operates through a Q-cycle mechanism that couples electron transfer to generation of the proton gradient that drives ATP synthesis. The cytochrome b subunit contains two ubiquinol reactive sites: the oxidation (QP) site and the reduction (QN) site. The polypeptide is Cytochrome bc1 complex cytochrome b subunit (qcrB) (Mycobacterium bovis (strain ATCC BAA-935 / AF2122/97)).